A 1390-amino-acid chain; its full sequence is ABC transporter G family member 43 (1390 aa).

Residues 1 to 22 (MTMPQTDGVEFASRNNLENGDG) are disordered. In terms of domain architecture, ABC transporter 1 spans 137 to 411 (SKLSRFTFSK…FEDCGFKCPQ (275 aa)). An ATP-binding site is contributed by 171-178 (GPPGCGKT). An ABC transmembrane type-2 1 domain is found at 489–701 (DMFKACSRRE…AEIGLTSNEF (213 aa)). The next 6 membrane-spanning stretches (helical) occupy residues 507-527 (FVYV…MTVY), 541-561 (YLLG…LPEL), 594-614 (IPIS…VIGY), 626-646 (LILF…GAVF), 651-671 (VATT…GFIV), and 737-757 (FGAL…ALTF). The ABC transporter 2 domain maps to 798 to 1043 (FTFQDVQYFI…VIEYFMSIPG (246 aa)). ATP is bound at residue 835-842 (GVSGAGKT). Residues 1115–1329 (EQFKACLWKQ…VLNGLLTSQY (215 aa)) enclose the ABC transmembrane type-2 2 domain. Transmembrane regions (helical) follow at residues 1134 to 1154 (YNLT…ILFL), 1173 to 1193 (MFTV…FCVA), 1218 to 1238 (VLVE…IVYP), 1253 to 1273 (FYSI…LVVV), 1279 to 1299 (IAFT…GYVM), 1307 to 1327 (WWIW…LLTS), and 1362 to 1382 (LVAV…AFFI).

It belongs to the ABC transporter superfamily. ABCG family. PDR (TC 3.A.1.205) subfamily.

It localises to the membrane. May be a general defense protein. The polypeptide is ABC transporter G family member 43 (ABCG43) (Arabidopsis thaliana (Mouse-ear cress)).